Consider the following 168-residue polypeptide: Peptide deformylase 2 (168 aa).

Residues Cys-91 and His-133 each contribute to the Fe cation site. Residue Glu-134 is part of the active site. Residue His-137 coordinates Fe cation.

The protein belongs to the polypeptide deformylase family. The cofactor is Fe(2+).

The catalysed reaction is N-terminal N-formyl-L-methionyl-[peptide] + H2O = N-terminal L-methionyl-[peptide] + formate. Its function is as follows. Removes the formyl group from the N-terminal Met of newly synthesized proteins. Requires at least a dipeptide for an efficient rate of reaction. N-terminal L-methionine is a prerequisite for activity but the enzyme has broad specificity at other positions. In Vibrio cholerae serotype O1 (strain ATCC 39315 / El Tor Inaba N16961), this protein is Peptide deformylase 2.